Consider the following 609-residue polypeptide: Replication protein A 70 kDa DNA-binding subunit (609 aa).

The disordered stretch occupies residues 113 to 163 (GNPQPYNDGQPQPAAPAPASAPAPAPSKLQNNSAPPPSMNRGTSKLFGGGS). Pro residues predominate over residues 125–137 (PAAPAPASAPAPA). Residues 188 to 272 (WTVRARVTNK…VKNDYEMTFN (85 aa)) constitute a DNA-binding region (OB). The C4-type zinc finger occupies 472–494 (CPSQDCNKKVIDQQNGLFRCEKC).

The protein belongs to the replication factor A protein 1 family. As to quaternary structure, component of the heterotrimeric canonical replication protein A complex (RPA). Interacts with rpain-a.

It is found in the nucleus. Its subcellular location is the PML body. Functionally, as part of the heterotrimeric replication protein A complex (RPA/RP-A), binds and stabilizes single-stranded DNA intermediates, that form during DNA replication or upon DNA stress. It prevents their reannealing and in parallel, recruits and activates different proteins and complexes involved in DNA metabolism. Thereby, it plays an essential role both in DNA replication and the cellular response to DNA damage. This Xenopus laevis (African clawed frog) protein is Replication protein A 70 kDa DNA-binding subunit (rpa1).